The following is an 87-amino-acid chain: DNA-directed RNA polymerase subunit omega (87 aa).

Belongs to the RNA polymerase subunit omega family. In terms of assembly, the RNAP catalytic core consists of 2 alpha, 1 beta, 1 beta' and 1 omega subunit. When a sigma factor is associated with the core the holoenzyme is formed, which can initiate transcription.

The catalysed reaction is RNA(n) + a ribonucleoside 5'-triphosphate = RNA(n+1) + diphosphate. Promotes RNA polymerase assembly. Latches the N- and C-terminal regions of the beta' subunit thereby facilitating its interaction with the beta and alpha subunits. In Azotobacter vinelandii (strain DJ / ATCC BAA-1303), this protein is DNA-directed RNA polymerase subunit omega.